Consider the following 421-residue polypeptide: Serine hydroxymethyltransferase (421 aa).

(6S)-5,6,7,8-tetrahydrofolate is bound by residues L121 and 125-127; that span reads GHL. K229 is subject to N6-(pyridoxal phosphate)lysine.

This sequence belongs to the SHMT family. As to quaternary structure, homodimer. Pyridoxal 5'-phosphate serves as cofactor.

The protein localises to the cytoplasm. It catalyses the reaction (6R)-5,10-methylene-5,6,7,8-tetrahydrofolate + glycine + H2O = (6S)-5,6,7,8-tetrahydrofolate + L-serine. The protein operates within one-carbon metabolism; tetrahydrofolate interconversion. It functions in the pathway amino-acid biosynthesis; glycine biosynthesis; glycine from L-serine: step 1/1. In terms of biological role, catalyzes the reversible interconversion of serine and glycine with tetrahydrofolate (THF) serving as the one-carbon carrier. This reaction serves as the major source of one-carbon groups required for the biosynthesis of purines, thymidylate, methionine, and other important biomolecules. Also exhibits THF-independent aldolase activity toward beta-hydroxyamino acids, producing glycine and aldehydes, via a retro-aldol mechanism. This Haemophilus influenzae (strain ATCC 51907 / DSM 11121 / KW20 / Rd) protein is Serine hydroxymethyltransferase.